The chain runs to 313 residues: Protein-methionine-sulfoxide reductase catalytic subunit MsrP (313 aa).

A signal peptide (tat-type signal) is located at residues 1 to 44; the sequence is MARWRPDMAEREATPEALYLRRRDFLALGAAGAVGLLLPRGARA. Mo-molybdopterin contacts are provided by residues Asn76, 79–80, Cys134, Thr169, Asn217, Arg222, and 233–235; these read YE and GAK.

The protein belongs to the MsrP family. In terms of assembly, heterodimer of a catalytic subunit (MsrP) and a heme-binding subunit (MsrQ). Mo-molybdopterin serves as cofactor. Post-translationally, predicted to be exported by the Tat system. The position of the signal peptide cleavage has not been experimentally proven.

The protein localises to the periplasm. The catalysed reaction is L-methionyl-[protein] + a quinone + H2O = L-methionyl-(S)-S-oxide-[protein] + a quinol. It carries out the reaction L-methionyl-[protein] + a quinone + H2O = L-methionyl-(R)-S-oxide-[protein] + a quinol. Functionally, part of the MsrPQ system that repairs oxidized periplasmic proteins containing methionine sulfoxide residues (Met-O), using respiratory chain electrons. Thus protects these proteins from oxidative-stress damage caused by reactive species of oxygen and chlorine generated by the host defense mechanisms. MsrPQ is essential for the maintenance of envelope integrity under bleach stress, rescuing a wide series of structurally unrelated periplasmic proteins from methionine oxidation. The catalytic subunit MsrP is non-stereospecific, being able to reduce both (R-) and (S-) diastereoisomers of methionine sulfoxide. The chain is Protein-methionine-sulfoxide reductase catalytic subunit MsrP from Anaeromyxobacter dehalogenans (strain 2CP-1 / ATCC BAA-258).